The primary structure comprises 180 residues: MIKRRINADELELEERVVQINRVSKVVKGGRRFSFSTVVVVGDGKGHVGIGMGKAAEVPEAIRKGVEAAKKNLIRVPLSGTTIPHEVQMEFAASKVRLLPAAPGTGVIAGRGVRPVLEMAGIKDVLSKRYGSNNPINVVKATFKALSALTSLEEQARMRGMTPRELNLRRMRREPAPQEA.

Residues 13–76 form the S5 DRBM domain; the sequence is LEERVVQINR…EAAKKNLIRV (64 aa).

Belongs to the universal ribosomal protein uS5 family. In terms of assembly, part of the 30S ribosomal subunit. Contacts proteins S4 and S8.

Functionally, with S4 and S12 plays an important role in translational accuracy. Located at the back of the 30S subunit body where it stabilizes the conformation of the head with respect to the body. This is Small ribosomal subunit protein uS5 from Roseiflexus sp. (strain RS-1).